Reading from the N-terminus, the 371-residue chain is Glycosyltransferase 8 domain-containing protein 1 (371 aa).

Residues 1–5 (MSFRK) lie on the Cytoplasmic side of the membrane. The chain crosses the membrane as a helical; Signal-anchor for type II membrane protein span at residues 6–26 (VTIIIWALAVILFLLALHHNF). Topologically, residues 27-371 (LSLSSLLRND…RRHMDTSNIK (345 aa)) are lumenal. N-linked (GlcNAc...) asparagine glycosylation occurs at asparagine 257.

This sequence belongs to the glycosyltransferase 8 family.

The protein localises to the membrane. The chain is Glycosyltransferase 8 domain-containing protein 1 (Glt8d1) from Rattus norvegicus (Rat).